Reading from the N-terminus, the 986-residue chain is Regulator of telomere elongation helicase 1 homolog (986 aa).

The region spanning 7 to 326 (AGIPVHFPFE…KEMLLELEKA (320 aa)) is the Helicase ATP-binding domain. 42–49 (SPTGTGKT) contributes to the ATP binding site. Residues Cys148, Cys166, Cys175, and Cys211 each contribute to the [4Fe-4S] cluster site. A DEAH box motif is present at residues 254–257 (DEGH). Residue Thr875 is modified to Phosphothreonine.

This sequence belongs to the helicase family. RAD3/XPD subfamily.

The protein resides in the nucleus. The enzyme catalyses ATP + H2O = ADP + phosphate + H(+). In terms of biological role, a probable ATP-dependent DNA helicase implicated in DNA repair and the maintenance of genomic stability. Acts as an anti-recombinase to counteract toxic recombination and limit crossover during meiosis. Regulates meiotic recombination and crossover homeostasis by physically dissociating strand invasion events and thereby promotes noncrossover repair by meiotic synthesis dependent strand annealing (SDSA) as well as disassembly of D loop recombination intermediates. This is Regulator of telomere elongation helicase 1 homolog from Drosophila grimshawi (Hawaiian fruit fly).